Consider the following 1446-residue polypeptide: Bud site selection protein 4 (1446 aa).

Disordered stretches follow at residues 69–103, 358–385, 425–446, 495–525, 823–844, and 1025–1044; these read NQWN…TNLL, VSEE…NPSS, DNNI…SGKE, ASED…QNLE, SSSL…SQAF, and KKNT…RVSS. Residues 86-98 are compositionally biased toward acidic residues; sequence NYDDDEEQGDESD. Composition is skewed to polar residues over residues 425 to 434 and 495 to 524; these read DNNISKSAND and ASED…QQNL. Basic and acidic residues predominate over residues 1028 to 1044; sequence TQKDLKDGTTAEKRVSS. The PH domain maps to 1314 to 1425; it reads DITKEGYLLQ…WYMKLKEVVE (112 aa).

It belongs to the BUD4 family.

Its subcellular location is the bud neck. Required for selection of future bud sites. Cooperates with other bud site selection proteins to recognize a spatial landmark during mitosis and they subsequently become a landmark for downstream polarity establishment factors that coordinate budding and cytokinesis. Involved in the septin organization at the bud neck. In Candida glabrata (strain ATCC 2001 / BCRC 20586 / JCM 3761 / NBRC 0622 / NRRL Y-65 / CBS 138) (Yeast), this protein is Bud site selection protein 4 (BUD4).